We begin with the raw amino-acid sequence, 245 residues long: Probable GTP-binding protein EngB (245 aa).

Positions 46–223 (DVPEIAFVGR…AQHLWDWAHP (178 aa)) constitute an EngB-type G domain. GTP contacts are provided by residues 54–61 (GRSNAGKS), 81–85 (GRTQS), 103–106 (DLPG), 173–176 (TKSD), and 202–204 (FSS). Mg(2+) contacts are provided by S61 and T83. The interval 219 to 245 (DWAHPPEKPAKKPKAEPAAEAATGDEG) is disordered. Residues 222–235 (HPPEKPAKKPKAEP) show a composition bias toward basic and acidic residues. Residues 236–245 (AAEAATGDEG) show a composition bias toward low complexity.

Belongs to the TRAFAC class TrmE-Era-EngA-EngB-Septin-like GTPase superfamily. EngB GTPase family. Mg(2+) is required as a cofactor.

Its function is as follows. Necessary for normal cell division and for the maintenance of normal septation. This chain is Probable GTP-binding protein EngB, found in Polaromonas sp. (strain JS666 / ATCC BAA-500).